We begin with the raw amino-acid sequence, 182 residues long: Large ribosomal subunit protein uL5 (182 aa).

Belongs to the universal ribosomal protein uL5 family. As to quaternary structure, part of the 50S ribosomal subunit; part of the 5S rRNA/L5/L18/L25 subcomplex. Contacts the 5S rRNA and the P site tRNA. Forms a bridge to the 30S subunit in the 70S ribosome.

In terms of biological role, this is one of the proteins that bind and probably mediate the attachment of the 5S RNA into the large ribosomal subunit, where it forms part of the central protuberance. In the 70S ribosome it contacts protein S13 of the 30S subunit (bridge B1b), connecting the 2 subunits; this bridge is implicated in subunit movement. Contacts the P site tRNA; the 5S rRNA and some of its associated proteins might help stabilize positioning of ribosome-bound tRNAs. This chain is Large ribosomal subunit protein uL5, found in Trichormus variabilis (strain ATCC 29413 / PCC 7937) (Anabaena variabilis).